The sequence spans 190 residues: Probable RNA-binding protein 18 (190 aa).

An RRM domain is found at 25 to 106; the sequence is HRLWIGNLDP…KKLVVRWAHA (82 aa). Residues 166–190 are disordered; it reads VYSYFKPPDKKRTTPYSRTAWKSRR.

The chain is Probable RNA-binding protein 18 (RBM18) from Pongo abelii (Sumatran orangutan).